The following is a 98-amino-acid chain: NADH-ubiquinone oxidoreductase chain 4L (98 aa).

A run of 3 helical transmembrane segments spans residues Met1 to Thr21, Val27 to Ile47, and Ile61 to Ile81.

The protein belongs to the complex I subunit 4L family. Core subunit of respiratory chain NADH dehydrogenase (Complex I) which is composed of 45 different subunits.

It is found in the mitochondrion inner membrane. The enzyme catalyses a ubiquinone + NADH + 5 H(+)(in) = a ubiquinol + NAD(+) + 4 H(+)(out). Functionally, core subunit of the mitochondrial membrane respiratory chain NADH dehydrogenase (Complex I) which catalyzes electron transfer from NADH through the respiratory chain, using ubiquinone as an electron acceptor. Part of the enzyme membrane arm which is embedded in the lipid bilayer and involved in proton translocation. The protein is NADH-ubiquinone oxidoreductase chain 4L (MT-ND4L) of Macaca hecki (Heck's macaque).